The sequence spans 156 residues: Transcription factor E (156 aa).

The HTH TFE/IIEalpha-type domain maps to 1 to 72 (MYGEKAKKVL…LWILNIDQIE (72 aa)).

It belongs to the TFE family. In terms of assembly, monomer. Interaction with RNA polymerase subunits RpoF and RpoE is necessary for Tfe stimulatory transcription activity. Able to interact with Tbp and RNA polymerase in the absence of DNA promoter. Interacts both with the preinitiation and elongation complexes.

In terms of biological role, transcription factor that plays a role in the activation of archaeal genes transcribed by RNA polymerase. Facilitates transcription initiation by enhancing TATA-box recognition by TATA-box-binding protein (Tbp), and transcription factor B (Tfb) and RNA polymerase recruitment. Not absolutely required for transcription in vitro, but particularly important in cases where Tbp or Tfb function is not optimal. It dynamically alters the nucleic acid-binding properties of RNA polymerases by stabilizing the initiation complex and destabilizing elongation complexes. Seems to translocate with the RNA polymerase following initiation and acts by binding to the non template strand of the transcription bubble in elongation complexes. This is Transcription factor E from Staphylothermus marinus (strain ATCC 43588 / DSM 3639 / JCM 9404 / F1).